Here is a 109-residue protein sequence, read N- to C-terminus: Anti-sigma-B factor antagonist (109 aa).

One can recognise an STAS domain in the interval 3–109; sequence INVDVKQNEN…ISAKSEGGVQ (107 aa). Residues serine 52 and serine 56 each carry the phosphoserine modification. Threonine 57 bears the Phosphothreonine mark.

It belongs to the anti-sigma-factor antagonist family. As to quaternary structure, monomer. In stressed cells, forms a complex with RsbW. The predominant form of this complex has a stoichiometry of 2:2 (one dimer of RsbW is bound by two monomers of RsbV). Binds to RsbW in the presence of low levels of ATP or under conditions of energy or environmental stress (through dephosphorylation by RsbP or RsbU). In terms of processing, phosphorylated by RsbW on a serine residue. Dephosphorylated by RsbP or RsbU.

Functionally, positive regulator of sigma-B activity. Non-phosphorylated RsbV binds to RsbW, preventing its association with sigma-B. When phosphorylated, releases RsbW, which is then free to complex with and inactivate sigma-B. This is Anti-sigma-B factor antagonist (rsbV) from Bacillus subtilis (strain 168).